A 546-amino-acid polypeptide reads, in one-letter code: Glutathione reductase (546 aa).

Residues 2–46 constitute an apicoplast transit peptide; the sequence is YKHRYFHFFFFFFFFLVSTKIIRSFTFLNNNTNLSNPVYFKKKAN. Serine 58 and glycine 59 together coordinate FAD. Glutathione is bound at residue serine 58. Arginine 65 provides a ligand contact to glutathione. Residues glutamate 78, threonine 85, cysteine 86, and lysine 94 each coordinate FAD. Cysteine 86 and cysteine 91 are joined by a disulfide. Tyrosine 141 is a glutathione binding site. FAD is bound at residue alanine 157. Residues isoleucine 233, glutamate 236, arginine 253, arginine 259, and glycine 318 each coordinate NADP(+). The FAD site is built by aspartate 358 and threonine 400. Arginine 408 serves as a coordination point for glutathione. Residue valine 430 coordinates NADP(+). Histidine 531 is an FAD binding site. The Proton acceptor role is filled by histidine 531.

It belongs to the class-I pyridine nucleotide-disulfide oxidoreductase family. As to quaternary structure, homodimer. FAD is required as a cofactor.

The protein localises to the cytoplasm. It localises to the plastid. It is found in the apicoplast. The catalysed reaction is 2 glutathione + NADP(+) = glutathione disulfide + NADPH + H(+). In terms of biological role, catalyzes the reduction of glutathione disulfide (GSSG) to reduced glutathione (GSH). Constitutes the major mechanism to maintain a high GSH:GSSG ratio in the cytosol. This is Glutathione reductase from Plasmodium falciparum (isolate 3D7).